Consider the following 206-residue polypeptide: Thymidylate kinase (206 aa).

11-18 (GIDGAGKT) is a binding site for ATP.

The protein belongs to the thymidylate kinase family.

The enzyme catalyses dTMP + ATP = dTDP + ADP. Its function is as follows. Phosphorylation of dTMP to form dTDP in both de novo and salvage pathways of dTTP synthesis. This chain is Thymidylate kinase, found in Burkholderia pseudomallei (strain 1106a).